Here is a 465-residue protein sequence, read N- to C-terminus: NADH-quinone oxidoreductase subunit N (465 aa).

Transmembrane regions (helical) follow at residues 6–26 (ILPETFSIISSLVLLLLGIVF), 30–50 (TINLLALGCTVITLIILILSA), 66–86 (LYIRSAQGLILIAGILVLLLL), 98–118 (SILILFTLFGMITLVSANNLI), 156–176 (ALSSCIMLYGMSLLYGYTGLV), 194–214 (IVFGLVLILIGLCFKLAIAPF), 226–246 (PTIVTAFFSTVPKAALVTFLI), 261–281 (FQPVLLYISALSVLISAFGAL), 289–309 (LLAYSSIGHIGFILASLSIFT), 317–337 (LIYLVIYIITNIGLFSYFIQI), 363–383 (ILLFSMAGIPPLAGFFAKLFI), 391–411 (GFIGMSLIFIVASVISCYYYL), and 432–452 (SLFIVTSVASLINIVLFMCVE).

The protein belongs to the complex I subunit 2 family. In terms of assembly, NDH-1 is composed of 14 different subunits. Subunits NuoA, H, J, K, L, M, N constitute the membrane sector of the complex.

The protein resides in the cell membrane. The catalysed reaction is a quinone + NADH + 5 H(+)(in) = a quinol + NAD(+) + 4 H(+)(out). In terms of biological role, NDH-1 shuttles electrons from NADH, via FMN and iron-sulfur (Fe-S) centers, to quinones in the respiratory chain. The immediate electron acceptor for the enzyme in this species is believed to be ubiquinone. Couples the redox reaction to proton translocation (for every two electrons transferred, four hydrogen ions are translocated across the cytoplasmic membrane), and thus conserves the redox energy in a proton gradient. This is NADH-quinone oxidoreductase subunit N from Wolbachia sp. subsp. Brugia malayi (strain TRS).